The following is a 500-amino-acid chain: Probable cytosol aminopeptidase (500 aa).

Residues Lys-264 and Asp-269 each contribute to the Mn(2+) site. Lys-276 is a catalytic residue. Mn(2+) contacts are provided by Asp-287, Asp-346, and Glu-348. The active site involves Arg-350.

Belongs to the peptidase M17 family. Mn(2+) serves as cofactor.

Its subcellular location is the cytoplasm. It catalyses the reaction Release of an N-terminal amino acid, Xaa-|-Yaa-, in which Xaa is preferably Leu, but may be other amino acids including Pro although not Arg or Lys, and Yaa may be Pro. Amino acid amides and methyl esters are also readily hydrolyzed, but rates on arylamides are exceedingly low.. The enzyme catalyses Release of an N-terminal amino acid, preferentially leucine, but not glutamic or aspartic acids.. Presumably involved in the processing and regular turnover of intracellular proteins. Catalyzes the removal of unsubstituted N-terminal amino acids from various peptides. The protein is Probable cytosol aminopeptidase of Rhodopseudomonas palustris (strain BisB5).